A 274-amino-acid chain; its full sequence is Large ribosomal subunit protein uL2 (274 aa).

The segment at 223–274 (VAMNPVDHPHGGGEGRTSGGRHPVSPWGMPTKGFKTRKNKSTDKYIVRRRNK) is disordered.

The protein belongs to the universal ribosomal protein uL2 family. Part of the 50S ribosomal subunit. Forms a bridge to the 30S subunit in the 70S ribosome.

Functionally, one of the primary rRNA binding proteins. Required for association of the 30S and 50S subunits to form the 70S ribosome, for tRNA binding and peptide bond formation. It has been suggested to have peptidyltransferase activity; this is somewhat controversial. Makes several contacts with the 16S rRNA in the 70S ribosome. In Aliivibrio salmonicida (strain LFI1238) (Vibrio salmonicida (strain LFI1238)), this protein is Large ribosomal subunit protein uL2.